Here is a 546-residue protein sequence, read N- to C-terminus: Glutamate--tRNA ligase (546 aa).

The 'HIGH' region motif lies at 42-52 (PSPTGFIHLGN). The short motif at 293-297 (KLSKR) is the 'KMSKS' region element. Lys-296 serves as a coordination point for ATP.

The protein belongs to the class-I aminoacyl-tRNA synthetase family. Glutamate--tRNA ligase type 1 subfamily. As to quaternary structure, monomer.

Its subcellular location is the cytoplasm. It catalyses the reaction tRNA(Glu) + L-glutamate + ATP = L-glutamyl-tRNA(Glu) + AMP + diphosphate. In terms of biological role, catalyzes the attachment of glutamate to tRNA(Glu) in a two-step reaction: glutamate is first activated by ATP to form Glu-AMP and then transferred to the acceptor end of tRNA(Glu). The protein is Glutamate--tRNA ligase of Acetivibrio thermocellus (strain ATCC 27405 / DSM 1237 / JCM 9322 / NBRC 103400 / NCIMB 10682 / NRRL B-4536 / VPI 7372) (Clostridium thermocellum).